The following is a 214-amino-acid chain: UPF0111 protein MJ0629 (214 aa).

This sequence belongs to the UPF0111 family.

The sequence is that of UPF0111 protein MJ0629 from Methanocaldococcus jannaschii (strain ATCC 43067 / DSM 2661 / JAL-1 / JCM 10045 / NBRC 100440) (Methanococcus jannaschii).